Here is a 251-residue protein sequence, read N- to C-terminus: Pyridoxine 5'-phosphate synthase (251 aa).

Positions 8 and 19 each coordinate 3-amino-2-oxopropyl phosphate. Catalysis depends on histidine 44, which acts as the Proton acceptor. Residues arginine 46 and histidine 51 each coordinate 1-deoxy-D-xylulose 5-phosphate. The active-site Proton acceptor is the glutamate 76. Threonine 106 lines the 1-deoxy-D-xylulose 5-phosphate pocket. Histidine 200 acts as the Proton donor in catalysis. 3-amino-2-oxopropyl phosphate contacts are provided by residues aspartate 201 and 223–224 (GH).

It belongs to the PNP synthase family. In terms of assembly, homooctamer; tetramer of dimers.

The protein localises to the cytoplasm. The catalysed reaction is 3-amino-2-oxopropyl phosphate + 1-deoxy-D-xylulose 5-phosphate = pyridoxine 5'-phosphate + phosphate + 2 H2O + H(+). It functions in the pathway cofactor biosynthesis; pyridoxine 5'-phosphate biosynthesis; pyridoxine 5'-phosphate from D-erythrose 4-phosphate: step 5/5. Catalyzes the complicated ring closure reaction between the two acyclic compounds 1-deoxy-D-xylulose-5-phosphate (DXP) and 3-amino-2-oxopropyl phosphate (1-amino-acetone-3-phosphate or AAP) to form pyridoxine 5'-phosphate (PNP) and inorganic phosphate. The chain is Pyridoxine 5'-phosphate synthase from Agrobacterium fabrum (strain C58 / ATCC 33970) (Agrobacterium tumefaciens (strain C58)).